We begin with the raw amino-acid sequence, 62 residues long: Large ribosomal subunit protein uL30 (62 aa).

Belongs to the universal ribosomal protein uL30 family. In terms of assembly, part of the 50S ribosomal subunit.

This is Large ribosomal subunit protein uL30 from Marinobacter nauticus (strain ATCC 700491 / DSM 11845 / VT8) (Marinobacter aquaeolei).